The chain runs to 483 residues: Peroxisomal biogenesis factor 3 (483 aa).

At 1–14 (MTGNRSLVQRHRKK) the chain is on the peroxisomal side. A helical transmembrane segment spans residues 15-35 (FVVSSVLFATLFATCAITVYF). The Cytoplasmic segment spans residues 36–483 (SKRWLYKQHL…SACVYSNFGL (448 aa)). Disordered stretches follow at residues 119–149 (GLSS…VSET) and 230–253 (NNLP…TRSI). Positions 242 to 253 (SDGTIDTDTRSI) are enriched in polar residues.

Belongs to the peroxin-3 family.

It localises to the peroxisome membrane. Its function is as follows. Involved in peroxisome biosynthesis. This is Peroxisomal biogenesis factor 3 (PEX3) from Kluyveromyces lactis (strain ATCC 8585 / CBS 2359 / DSM 70799 / NBRC 1267 / NRRL Y-1140 / WM37) (Yeast).